The chain runs to 450 residues: Enolase (450 aa).

Glutamine 173 contacts (2R)-2-phosphoglycerate. The active-site Proton donor is glutamate 215. Mg(2+)-binding residues include aspartate 254, glutamate 308, and aspartate 335. The (2R)-2-phosphoglycerate site is built by lysine 360, arginine 389, serine 390, and lysine 411. Lysine 360 functions as the Proton acceptor in the catalytic mechanism.

This sequence belongs to the enolase family. The cofactor is Mg(2+).

It localises to the cytoplasm. Its subcellular location is the secreted. It is found in the cell surface. The enzyme catalyses (2R)-2-phosphoglycerate = phosphoenolpyruvate + H2O. It participates in carbohydrate degradation; glycolysis; pyruvate from D-glyceraldehyde 3-phosphate: step 4/5. Catalyzes the reversible conversion of 2-phosphoglycerate (2-PG) into phosphoenolpyruvate (PEP). It is essential for the degradation of carbohydrates via glycolysis. The chain is Enolase from Malacoplasma penetrans (strain HF-2) (Mycoplasma penetrans).